Consider the following 773-residue polypeptide: C-Maf-inducing protein (773 aa).

The tract at residues 1–28 (MDVTSSSGGGDPRQIEETKPLLGSDVSG) is disordered. The PH domain maps to 54 to 163 (LLQEGDIQVC…HSLQWKKKIY (110 aa)). 4 positions are modified to phosphoserine: Ser-349, Ser-377, Ser-382, and Ser-660. LRR repeat units lie at residues 663–686 (NLEN…IKLP), 687–707 (SLKQ…RLLS), 712–732 (MLQV…LALS), and 736–756 (SLCS…EDLK).

In terms of assembly, interacts with FLNA.

The protein resides in the nucleus. It is found in the cytoplasm. Functionally, plays a role in T-cell signaling pathway. The protein is C-Maf-inducing protein (Cmip) of Mus musculus (Mouse).